A 194-amino-acid chain; its full sequence is Thymidine kinase (194 aa).

ATP-binding positions include 15–22 and 88–91; these read GSMFSGKS and DEVQ. Glu-89 acts as the Proton acceptor in catalysis. The Zn(2+) site is built by Cys-145, Cys-148, Cys-183, and His-186.

The protein belongs to the thymidine kinase family. As to quaternary structure, homotetramer.

Its subcellular location is the cytoplasm. The enzyme catalyses thymidine + ATP = dTMP + ADP + H(+). This chain is Thymidine kinase, found in Bacillus velezensis (strain DSM 23117 / BGSC 10A6 / LMG 26770 / FZB42) (Bacillus amyloliquefaciens subsp. plantarum).